Here is a 148-residue protein sequence, read N- to C-terminus: Stathmin (148 aa).

Residues 4–145 (SDIQVKELEK…NKEGKDPGEA (142 aa)) enclose the SLD domain. S16 is subject to Phosphoserine; by PKA. At S38 the chain carries Phosphoserine; by CDK1. A coiled-coil region spans residues 41–140 (KKKDLSLEEI…EEVRKNKEGK (100 aa)). S63 is modified (phosphoserine; by PKA). A disordered region spans residues 122–148 (RLREKDKHIEEVRKNKEGKDPGEAETN).

This sequence belongs to the stathmin family. Binds to two alpha/beta-tubulin heterodimers. In terms of processing, many different phosphorylated forms are observed depending on specific combinations among the sites which can be phosphorylated. MAPK is responsible for the phosphorylation of stathmin in response to NGF.

It localises to the cytoplasm. The protein resides in the cytoskeleton. In terms of biological role, involved in the regulation of the microtubule (MT) filament system by destabilizing microtubules. It prevents assembly and promotes disassembly of microtubules. This chain is Stathmin (STMN1), found in Gallus gallus (Chicken).